The primary structure comprises 41 residues: Mu-conotoxin pn4c (41 aa).

A propeptide spanning residues 1–24 (DQPAERMQDDISSEHHPFFDPVKR) is cleaved from the precursor.

This sequence belongs to the conotoxin M superfamily. Contains 3 disulfide bonds. They are not added, since framework IV presents two different connectivities (I-V, II-III, IV-VI and I-III, II-V, IV-VI). As to expression, expressed by the venom duct.

It localises to the secreted. In terms of biological role, mu-conotoxins block voltage-gated sodium channels (Nav). Blocks reversibly sodium channels in molluskan neurons, but has no effect on sodium currents in bovine chromaffin cells or in rat brain synaptosomes. Induces paralysis in mollusks (C.retripictus). The polypeptide is Mu-conotoxin pn4c (Conus pennaceus (Feathered cone)).